A 252-amino-acid polypeptide reads, in one-letter code: Imidazole glycerol phosphate synthase subunit HisF (252 aa).

Catalysis depends on residues aspartate 11 and aspartate 130.

The protein belongs to the HisA/HisF family. In terms of assembly, heterodimer of HisH and HisF.

It localises to the cytoplasm. The catalysed reaction is 5-[(5-phospho-1-deoxy-D-ribulos-1-ylimino)methylamino]-1-(5-phospho-beta-D-ribosyl)imidazole-4-carboxamide + L-glutamine = D-erythro-1-(imidazol-4-yl)glycerol 3-phosphate + 5-amino-1-(5-phospho-beta-D-ribosyl)imidazole-4-carboxamide + L-glutamate + H(+). Its pathway is amino-acid biosynthesis; L-histidine biosynthesis; L-histidine from 5-phospho-alpha-D-ribose 1-diphosphate: step 5/9. Functionally, IGPS catalyzes the conversion of PRFAR and glutamine to IGP, AICAR and glutamate. The HisF subunit catalyzes the cyclization activity that produces IGP and AICAR from PRFAR using the ammonia provided by the HisH subunit. The sequence is that of Imidazole glycerol phosphate synthase subunit HisF from Lacticaseibacillus paracasei (strain ATCC 334 / BCRC 17002 / CCUG 31169 / CIP 107868 / KCTC 3260 / NRRL B-441) (Lactobacillus paracasei).